A 362-amino-acid chain; its full sequence is Protein RecA (362 aa).

Position 77 to 84 (G77 to T84) interacts with ATP.

Belongs to the RecA family.

The protein resides in the cytoplasm. In terms of biological role, can catalyze the hydrolysis of ATP in the presence of single-stranded DNA, the ATP-dependent uptake of single-stranded DNA by duplex DNA, and the ATP-dependent hybridization of homologous single-stranded DNAs. It interacts with LexA causing its activation and leading to its autocatalytic cleavage. In Nitrobacter winogradskyi (strain ATCC 25391 / DSM 10237 / CIP 104748 / NCIMB 11846 / Nb-255), this protein is Protein RecA.